Reading from the N-terminus, the 219-residue chain is Suppressor-of-stellate-like protein (219 aa).

The tract at residues 194 to 219 (SAESPPIKVESSVSKSPSWLRNVPNF) is disordered. Over residues 204-219 (SSVSKSPSWLRNVPNF) the composition is skewed to polar residues.

This sequence belongs to the casein kinase 2 subunit beta family.

This is Suppressor-of-stellate-like protein (Ssl) from Drosophila melanogaster (Fruit fly).